The primary structure comprises 142 residues: uncharacterized protein (142 aa).

The disordered stretch occupies residues 1–31 (MSLPKKKKPEVEEEEKPEEEEEKEEEQEIDI). The span at 11–29 (VEEEEKPEEEEEKEEEQEI) shows a compositional bias: acidic residues.

This is an uncharacterized protein from Acidianus sp. F28 (AFV-2).